Consider the following 222-residue polypeptide: Flagellar L-ring protein (222 aa).

An N-terminal signal peptide occupies residues 1–18 (MKTTRAIAMLGLLLGLAA). A lipid anchor (N-palmitoyl cysteine) is attached at C19. The S-diacylglycerol cysteine moiety is linked to residue C19.

It belongs to the FlgH family. In terms of assembly, the basal body constitutes a major portion of the flagellar organelle and consists of four rings (L,P,S, and M) mounted on a central rod.

The protein localises to the cell outer membrane. It is found in the bacterial flagellum basal body. Assembles around the rod to form the L-ring and probably protects the motor/basal body from shearing forces during rotation. The polypeptide is Flagellar L-ring protein (Thiobacillus denitrificans (strain ATCC 25259 / T1)).